Reading from the N-terminus, the 422-residue chain is Monoacylglycerol lipase ABHD2 (422 aa).

The Cytoplasmic segment spans residues 1–15 (MSAQLEADVRTMSPE). The helical; Signal-anchor for type II membrane protein transmembrane segment at 16–36 (MPAMFDGMKLAAVAAVLYVIV) threads the bilayer. The Extracellular segment spans residues 37–422 (RSLNLKCPTA…HKPQCHQQKE (386 aa)). Positions 134–385 (MVICPGIGNH…HGGHLGFFEG (252 aa)) constitute an AB hydrolase-1 domain. Asn-142 is a glycosylation site (N-linked (GlcNAc...) asparagine). Ser-213 serves as the catalytic Nucleophile. Residues Asn-285, Asn-335, and Asn-344 are each glycosylated (N-linked (GlcNAc...) asparagine). Residues Asp-348 and His-379 each act as charge relay system in the active site.

The protein belongs to the AB hydrolase superfamily. AB hydrolase 4 family.

Its subcellular location is the cell membrane. The enzyme catalyses Hydrolyzes glycerol monoesters of long-chain fatty acids.. It carries out the reaction an acetyl ester + H2O = an aliphatic alcohol + acetate + H(+). The catalysed reaction is a triacylglycerol + H2O = a diacylglycerol + a fatty acid + H(+). It catalyses the reaction 2-(5Z,8Z,11Z,14Z-eicosatetraenoyl)-glycerol + H2O = glycerol + (5Z,8Z,11Z,14Z)-eicosatetraenoate + H(+). The enzyme catalyses a butanoate ester + H2O = an aliphatic alcohol + butanoate + H(+). It carries out the reaction hexadecanoate ester + H2O = an aliphatic alcohol + hexadecanoate + H(+). Its activity is regulated as follows. Acylglycerol lipase activity is activated upon binding to progesterone. Progesterone-dependent acylglycerol lipase that catalyzes hydrolysis of endocannabinoid arachidonoylglycerol (AG) from cell membrane. Acts as a progesterone receptor: progesterone-binding activates the acylglycerol lipase activity, mediating degradation of 1-arachidonoylglycerol (1AG) and 2-arachidonoylglycerol (2AG) to glycerol and arachidonic acid (AA). Also displays an ester hydrolase activity against acetyl ester, butanoate ester and hexadecanoate ester. Plays a key role in sperm capacitation in response to progesterone by mediating degradation of 2AG, an inhibitor of the sperm calcium channel CatSper, leading to calcium influx via CatSper and sperm activation. May also play a role in smooth muscle cells migration. The protein is Monoacylglycerol lipase ABHD2 (abhd2b) of Danio rerio (Zebrafish).